The chain runs to 327 residues: Protoheme IX farnesyltransferase (327 aa).

The next 8 membrane-spanning stretches (helical) occupy residues 35 to 55 (LIPL…GWPL), 60 to 80 (LVCT…LNCL), 106 to 126 (SAFI…VSGV), 129 to 149 (LAAG…TALL), 157 to 177 (IVIG…AATG), 185 to 205 (WLFA…ALLL), 234 to 254 (GWIT…GGAF), and 283 to 303 (AKAL…LLIL).

The protein belongs to the UbiA prenyltransferase family. Protoheme IX farnesyltransferase subfamily.

It is found in the cell inner membrane. The enzyme catalyses heme b + (2E,6E)-farnesyl diphosphate + H2O = Fe(II)-heme o + diphosphate. The protein operates within porphyrin-containing compound metabolism; heme O biosynthesis; heme O from protoheme: step 1/1. Its function is as follows. Converts heme B (protoheme IX) to heme O by substitution of the vinyl group on carbon 2 of heme B porphyrin ring with a hydroxyethyl farnesyl side group. The sequence is that of Protoheme IX farnesyltransferase from Synechococcus sp. (strain CC9605).